We begin with the raw amino-acid sequence, 152 residues long: 3-hydroxyacyl-[acyl-carrier-protein] dehydratase FabZ (152 aa).

His58 is an active-site residue.

The protein belongs to the thioester dehydratase family. FabZ subfamily.

Its subcellular location is the cytoplasm. It carries out the reaction a (3R)-hydroxyacyl-[ACP] = a (2E)-enoyl-[ACP] + H2O. In terms of biological role, involved in unsaturated fatty acids biosynthesis. Catalyzes the dehydration of short chain beta-hydroxyacyl-ACPs and long chain saturated and unsaturated beta-hydroxyacyl-ACPs. This chain is 3-hydroxyacyl-[acyl-carrier-protein] dehydratase FabZ, found in Prochlorococcus marinus (strain MIT 9215).